Here is a 442-residue protein sequence, read N- to C-terminus: uncharacterized protein (442 aa).

The interval 211 to 269 (LDYSTDKPEDSESEDIELEDSESEDSESEDIDQHGGQGPDDDEFNANFDDPQFDEFDFG) is disordered. Positions 221-240 (SESEDIELEDSESEDSESED) are enriched in acidic residues.

It is found in the virion. This is an uncharacterized protein from Acanthamoeba polyphaga (Amoeba).